The following is a 411-amino-acid chain: Glycogen synthase kinase-3 homolog MsK-2 (411 aa).

Residues tyrosine 74–phenylalanine 358 enclose the Protein kinase domain. ATP contacts are provided by residues valine 80–valine 88 and lysine 103. Aspartate 199 serves as the catalytic Proton acceptor. Tyrosine 234 is subject to Phosphotyrosine.

This sequence belongs to the protein kinase superfamily. CMGC Ser/Thr protein kinase family. GSK-3 subfamily. Absent in leaves and petioles while a moderate expression is seen in the stems, roots, and nodes.

The enzyme catalyses L-seryl-[protein] + ATP = O-phospho-L-seryl-[protein] + ADP + H(+). It catalyses the reaction L-threonyl-[protein] + ATP = O-phospho-L-threonyl-[protein] + ADP + H(+). This is Glycogen synthase kinase-3 homolog MsK-2 (MSK-2) from Medicago sativa (Alfalfa).